A 714-amino-acid polypeptide reads, in one-letter code: Developmentally-regulated protein kinase 1 (714 aa).

Disordered regions lie at residues 88-122 (NNNISNNNNNNNNNNNNNNNNNNNNNNINNNNNFN) and 174-266 (CNMI…IINN). Composition is skewed to low complexity over residues 174-200 (CNMINNDNNNNNNNNNNNNNNNNNNNN), 209-227 (PSSNSTPSHSSPSSPTTSS), and 240-266 (NFNQQLQNNNNSNNNSNNNNNNNIINN). One can recognise a Protein kinase domain in the interval 334–589 (FNFYGSLGSG…SCSIRNHKWF (256 aa)). Residues 340–348 (LGSGSFGTA) and Lys-363 contribute to the ATP site. The active-site Proton acceptor is Asp-457. Thr-488 bears the Phosphothreonine mark.

This sequence belongs to the protein kinase superfamily. AGC Ser/Thr protein kinase family.

The enzyme catalyses L-seryl-[protein] + ATP = O-phospho-L-seryl-[protein] + ADP + H(+). The catalysed reaction is L-threonyl-[protein] + ATP = O-phospho-L-threonyl-[protein] + ADP + H(+). The chain is Developmentally-regulated protein kinase 1 (pkaD) from Dictyostelium discoideum (Social amoeba).